Consider the following 266-residue polypeptide: Putative transmembrane ascorbate-dependent reductase CYB561 homolog (266 aa).

Residues 1 to 22 lie on the Cytoplasmic side of the membrane; it reads MSLLFDPGFVILREDQSVKLFN. The chain crosses the membrane as a helical span at residues 23–43; the sequence is IILVMSQVFGGLAVLLVTIWM. A Cytochrome b561 domain is found at 27–240; sequence MSQVFGGLAV…YTVCVLLLVL (214 aa). At 44 to 61 the chain is on the vesicular side; the sequence is SKFESGFAWNEDPDKEFN. A helical membrane pass occupies residues 62–82; sequence YHPTFMIMGMVFLFGEALLVY. His63, Arg83, and Lys90 together coordinate heme b. Over 83 to 95 the chain is Cytoplasmic; sequence RVFRNERKKFSKT. Residues Lys90 and Lys94 each coordinate L-ascorbate. The chain crosses the membrane as a helical span at residues 96–116; that stretch reads LHVILHSCVLVFMLMALKAVF. Residues His97, 134 to 137, and His139 contribute to the heme b site; that span reads NLVS. Residues 117 to 141 are Vesicular-facing; it reads DYHNLHKDPSGNPAPIVNLVSLHSW. The helical transmembrane segment at 142–162 threads the bilayer; sequence IGLSVVILYFAQYIVGFITYF. Residues 163–176 are Cytoplasmic-facing; sequence FPGMPIPIRQLVMP. An L-ascorbate-binding site is contributed by Arg171. A helical membrane pass occupies residues 177-197; that stretch reads FHQMFGVLIFIFVSITVAMGI. Heme b contacts are provided by His178 and Glu199. At 198–219 the chain is on the vesicular side; it reads SERAAWKHTCWTKEGQMCAQQA. Residues 220–240 form a helical membrane-spanning segment; the sequence is TSSFVGVFTFLYTVCVLLLVL. Topologically, residues 241 to 266 are cytoplasmic; the sequence is NPRWKRQSLPEEEGLHHLTSSHSMSD. Lys245 provides a ligand contact to heme b.

It depends on heme b as a cofactor.

It localises to the membrane. It catalyses the reaction monodehydro-L-ascorbate radical(out) + L-ascorbate(in) = monodehydro-L-ascorbate radical(in) + L-ascorbate(out). Putative transmembrane reductase that uses ascorbate as an electron donor in the cytoplasm and transfers electrons across membranes to reduce monodehydro-L-ascorbate radical in the lumen of secretory vesicles. The chain is Putative transmembrane ascorbate-dependent reductase CYB561 homolog from Caenorhabditis elegans.